A 245-amino-acid chain; its full sequence is NADH-quinone oxidoreductase subunit C (245 aa).

Over residues 1–10 (MSAPQDRTDD) the composition is skewed to basic and acidic residues. 2 disordered regions span residues 1 to 54 (MSAP…GYGG) and 216 to 245 (PQRK…RSYQ). Over residues 11 to 28 (GGVPVPVTPAGATGGAPA) the composition is skewed to low complexity. Over residues 39-54 (GMFGDQGTGDVSGYGG) the composition is skewed to gly residues.

The protein belongs to the complex I 30 kDa subunit family. In terms of assembly, NDH-1 is composed of 14 different subunits. Subunits NuoB, C, D, E, F, and G constitute the peripheral sector of the complex.

Its subcellular location is the cell membrane. It carries out the reaction a quinone + NADH + 5 H(+)(in) = a quinol + NAD(+) + 4 H(+)(out). In terms of biological role, NDH-1 shuttles electrons from NADH, via FMN and iron-sulfur (Fe-S) centers, to quinones in the respiratory chain. The immediate electron acceptor for the enzyme in this species is believed to be a menaquinone. Couples the redox reaction to proton translocation (for every two electrons transferred, four hydrogen ions are translocated across the cytoplasmic membrane), and thus conserves the redox energy in a proton gradient. This is NADH-quinone oxidoreductase subunit C from Salinispora tropica (strain ATCC BAA-916 / DSM 44818 / JCM 13857 / NBRC 105044 / CNB-440).